The primary structure comprises 144 residues: Large ribosomal subunit protein uL15 (144 aa).

The disordered stretch occupies residues 1–48 (MIKLECLQDPSPRKRRTKLLGRGPSSGHGKTSGRGHKGDGSRSGYKRR).

This sequence belongs to the universal ribosomal protein uL15 family. As to quaternary structure, part of the 50S ribosomal subunit.

In terms of biological role, binds to the 23S rRNA. In Chlamydia trachomatis serovar L2 (strain ATCC VR-902B / DSM 19102 / 434/Bu), this protein is Large ribosomal subunit protein uL15.